The chain runs to 459 residues: Pup--protein ligase (459 aa).

Position 9 (E9) interacts with Mg(2+). R54 provides a ligand contact to ATP. Residue Y56 participates in Mg(2+) binding. The active-site Proton acceptor is D58. Position 64 (E64) interacts with Mg(2+). 2 residues coordinate ATP: T67 and W421.

The protein belongs to the Pup ligase/Pup deamidase family. Pup-conjugating enzyme subfamily.

It catalyses the reaction ATP + [prokaryotic ubiquitin-like protein]-L-glutamate + [protein]-L-lysine = ADP + phosphate + N(6)-([prokaryotic ubiquitin-like protein]-gamma-L-glutamyl)-[protein]-L-lysine.. The protein operates within protein degradation; proteasomal Pup-dependent pathway. It functions in the pathway protein modification; protein pupylation. Catalyzes the covalent attachment of the prokaryotic ubiquitin-like protein modifier Pup to the proteasomal substrate proteins, thereby targeting them for proteasomal degradation. This tagging system is termed pupylation. The ligation reaction involves the side-chain carboxylate of the C-terminal glutamate of Pup and the side-chain amino group of a substrate lysine. This is Pup--protein ligase from Jonesia denitrificans (strain ATCC 14870 / DSM 20603 / BCRC 15368 / CIP 55.134 / JCM 11481 / NBRC 15587 / NCTC 10816 / Prevot 55134) (Listeria denitrificans).